The primary structure comprises 152 residues: 3-hydroxyacyl-[acyl-carrier-protein] dehydratase FabZ (152 aa).

The active site involves H57.

It belongs to the thioester dehydratase family. FabZ subfamily.

The protein resides in the cytoplasm. The enzyme catalyses a (3R)-hydroxyacyl-[ACP] = a (2E)-enoyl-[ACP] + H2O. In terms of biological role, involved in unsaturated fatty acids biosynthesis. Catalyzes the dehydration of short chain beta-hydroxyacyl-ACPs and long chain saturated and unsaturated beta-hydroxyacyl-ACPs. In Bradyrhizobium sp. (strain ORS 278), this protein is 3-hydroxyacyl-[acyl-carrier-protein] dehydratase FabZ.